The chain runs to 121 residues: Fumarate reductase subunit D (121 aa).

A run of 3 helical transmembrane segments spans residues 22-42, 57-77, and 100-120; these read GVWFAMITPVTVLLMGILLPL, AFVSHPIGGAFTVLSLSLPMW, and YACYLAAALVTVLATVWVIQL.

The protein belongs to the FrdD family. Part of an enzyme complex containing four subunits: a flavoprotein (FrdA), an iron-sulfur protein (FrdB), and two hydrophobic anchor proteins (FrdC and FrdD).

The protein localises to the cell inner membrane. Anchors the catalytic components of the fumarate reductase complex to the cell membrane, binds quinones. In Shewanella putrefaciens (strain CN-32 / ATCC BAA-453), this protein is Fumarate reductase subunit D.